The following is a 358-amino-acid chain: uncharacterized protein (358 aa).

ATP is bound at residue 207 to 214; the sequence is AAVKDGKT.

This is an uncharacterized protein from Bacillus subtilis (strain 168).